Consider the following 96-residue polypeptide: Small ribosomal subunit protein bS6 (96 aa).

Belongs to the bacterial ribosomal protein bS6 family.

Its function is as follows. Binds together with bS18 to 16S ribosomal RNA. The sequence is that of Small ribosomal subunit protein bS6 from Streptococcus pneumoniae serotype 2 (strain D39 / NCTC 7466).